The chain runs to 385 residues: Glucans biosynthesis protein C (385 aa).

The next 10 helical transmembrane spans lie at 17-37 (AWLM…SHTW), 60-80 (MQVF…RYPL), 91-111 (VGIP…IMLQ), 137-157 (ISHL…VWIF), 173-193 (KFSM…YAVI), 212-232 (FIVM…LAFI), 239-259 (LFTT…VAYL), 274-294 (TESV…FSFG), 311-331 (ASLF…AYIT), and 338-358 (WLGF…LYEI).

This sequence belongs to the acyltransferase 3 family. OpgC subfamily.

It localises to the cell membrane. Its pathway is glycan metabolism; osmoregulated periplasmic glucan (OPG) biosynthesis. Functionally, necessary for the succinyl substitution of periplasmic glucans. Could catalyze the transfer of succinyl residues from the cytoplasmic side of the membrane to the nascent glucan backbones on the periplasmic side of the membrane. The polypeptide is Glucans biosynthesis protein C (Escherichia coli O139:H28 (strain E24377A / ETEC)).